The sequence spans 363 residues: MFTRRFIPVVQSTKQNIGKYVRKDARFTLLTYNMLSPSYMWPQVYTYVAEPYKNWSYRHRLLEKELLNTFKADIMCLQEMTARDYEDYWHDSIGVDVNYGSKFISKTPPKYWKKPVKDMDGVSIFYNLAKFDFISSSGIYLNQLLNVFNQRELKYLYNKKVTLTDGASNVIGEDSLLDVLKGKNQVCLFVSLRHKETGTIFVVLNTHLYWKYDEVKLTQCMIIMRELSKIIKQLLPGDVKGQERVKILFTGDLNSTRDSLVVNFLQGQIVSHGDLNLINPMRPYLDRCVYDDIPKDYFVHTCYSGKLKGIFDYVWYHDSDFLLTKILTGNEVSDELLASNQLGLPNENHPSDHIPLLTEFKIL.

Residues 1 to 23 (MFTRRFIPVVQSTKQNIGKYVRK) constitute a mitochondrion transit peptide.

The protein belongs to the CCR4/nocturin family.

It is found in the mitochondrion. The protein is RNA exonuclease NGL1 (NGL1) of Saccharomyces cerevisiae (strain ATCC 204508 / S288c) (Baker's yeast).